Reading from the N-terminus, the 213-residue chain is MAALAVSGLSQQVRCFSTSVVRPFAKLVRPPVQIYGIEGRYATALYSAASKQNKLEQVEKELLRVGQILKEPKMAASLLNPYVKRSVKVKSLSDMTAKEKFSPLTSNLINLLAENGRLTNTPAVISAFSTMMSVHRGEVPCTVTTASALDEATLTELKTVLKSFLSKGQVLKLEVKIDPSIMGGMIVRIGEKYVDMSAKTKIQKLSRAMREIL.

The N-terminal 23 residues, 1–23 (MAALAVSGLSQQVRCFSTSVVRP), are a transit peptide targeting the mitochondrion. Positions 5–23 (AVSGLSQQVRCFSTSVVRP) match the SIFI-degron motif. N6-acetyllysine occurs at positions 54, 60, 70, and 73. Lys90 carries the post-translational modification N6-succinyllysine. N6-acetyllysine; alternate occurs at positions 100, 158, and 162. 3 positions are modified to N6-succinyllysine; alternate: Lys100, Lys158, and Lys162. An N6-acetyllysine mark is found at Lys172, Lys176, and Lys192. The residue at position 199 (Lys199) is an N6-succinyllysine.

The protein belongs to the ATPase delta chain family. Component of the ATP synthase complex composed at least of ATP5F1A/subunit alpha, ATP5F1B/subunit beta, ATP5MC1/subunit c (homooctomer), MT-ATP6/subunit a, MT-ATP8/subunit 8, ATP5ME/subunit e, ATP5MF/subunit f, ATP5MG/subunit g, ATP5MK/subunit k, ATP5MJ/subunit j, ATP5F1C/subunit gamma, ATP5F1D/subunit delta, ATP5F1E/subunit epsilon, ATP5PF/subunit F6, ATP5PB/subunit b, ATP5PD/subunit d, ATP5PO/subunit OSCP. ATP synthase complex consists of a soluble F(1) head domain (subunits alpha(3) and beta(3)) - the catalytic core - and a membrane F(0) domain - the membrane proton channel (subunits c, a, 8, e, f, g, k and j). These two domains are linked by a central stalk (subunits gamma, delta, and epsilon) rotating inside the F1 region and a stationary peripheral stalk (subunits F6, b, d, and OSCP). Acetylation at Lys-162 decreases ATP production. Deacetylated by SIRT3. In terms of processing, in response to mitochondrial stress, the precursor protein is ubiquitinated by the SIFI complex in the cytoplasm before mitochondrial import, leading to its degradation. Within the SIFI complex, UBR4 initiates ubiquitin chain that are further elongated or branched by KCMF1.

It is found in the mitochondrion. The protein resides in the mitochondrion inner membrane. Subunit OSCP, of the mitochondrial membrane ATP synthase complex (F(1)F(0) ATP synthase or Complex V) that produces ATP from ADP in the presence of a proton gradient across the membrane which is generated by electron transport complexes of the respiratory chain. ATP synthase complex consist of a soluble F(1) head domain - the catalytic core - and a membrane F(1) domain - the membrane proton channel. These two domains are linked by a central stalk rotating inside the F(1) region and a stationary peripheral stalk. During catalysis, ATP synthesis in the catalytic domain of F(1) is coupled via a rotary mechanism of the central stalk subunits to proton translocation. In vivo, can only synthesize ATP although its ATP hydrolase activity can be activated artificially in vitro. Part of the complex F(0) domain. Part of the complex F(0) domain and the peripheric stalk, which acts as a stator to hold the catalytic alpha(3)beta(3) subcomplex and subunit a/ATP6 static relative to the rotary elements. This is ATP synthase peripheral stalk subunit OSCP, mitochondrial from Bos taurus (Bovine).